We begin with the raw amino-acid sequence, 1177 residues long: Solute carrier family 9 member C1 (1177 aa).

The Extracellular segment spans residues 1-17; the sequence is MAGIFKEFFFSTEDLPE. Residues 18-37 form a helical membrane-spanning segment; it reads VILTLSLISSIGAFLNRHLE. The Cytoplasmic portion of the chain corresponds to 38 to 42; the sequence is DFPIP. A helical transmembrane segment spans residues 43 to 60; it reads VPVILFLLGCSFEVLSFT. Residues 61 to 76 lie on the Extracellular side of the membrane; it reads SSQVQRYANAIQWMSP. A helical membrane pass occupies residues 77-93; sequence DLFFRIFTPVVFFTTAF. Topologically, residues 94 to 103 are cytoplasmic; it reads DMDTYMLQKL. Residues 104–129 traverse the membrane as a helical segment; the sequence is FWQILLISIPGFLVNYILVLWHLASV. The tract at residues 104-191 is transport core domain; it reads FWQILLISIP…SLITFTSIMD (88 aa). At 130-135 the chain is on the extracellular side; the sequence is NQLLLK. Residues 136–161 traverse the membrane as a helical segment; it reads PTQWLLFSAILVSSDPMLTAAAIRDL. The Cytoplasmic portion of the chain corresponds to 162-164; that stretch reads GLS. The helical transmembrane segment at 165-190 threads the bilayer; that stretch reads RSLISLINGESLMTSVISLITFTSIM. Over 191–204 the chain is Extracellular; it reads DFDQRLQSKRNHTL. Residues 205–236 form a helical membrane-spanning segment; that stretch reads AEEIVGGICSYIIASFLFGILSSKLIQFWMST. The Cytoplasmic portion of the chain corresponds to 237–240; sequence VFGD. A helical transmembrane segment spans residues 241–262; it reads DVNHISLIFSILYLIFYICELV. The Extracellular segment spans residues 263-265; that stretch reads GMS. Residues 266–279 traverse the membrane as a helical segment; it reads GIFTLAIVGLLLNS. Residues 280 to 286 lie on the Cytoplasmic side of the membrane; it reads TSFKAAI. The helical transmembrane segment at 287-319 threads the bilayer; sequence EETLLLEFWTFLSRIAFLMVFTFFGLLIPAHTY. Residues 320–324 lie on the Extracellular side of the membrane; that stretch reads LYIEF. The helical transmembrane segment at 325 to 354 threads the bilayer; it reads VDIYYSLNIYLTLIVLRFLTLLLISPVLSR. Residues 325–426 form a transport core domain region; the sequence is VDIYYSLNIY…FILPVAVTIL (102 aa). Residues 355 to 360 lie on the Cytoplasmic side of the membrane; the sequence is VGHEFS. A helical transmembrane segment spans residues 361 to 391; the sequence is WRWIFIMVCSEMKGMPNINMALLLAYSDLYF. Residues 392-395 lie on the Extracellular side of the membrane; that stretch reads GSDK. Residues 396–426 traverse the membrane as a helical segment; the sequence is EKSQILFHGVLVCLITLVVNRFILPVAVTIL. The Cytoplasmic portion of the chain corresponds to 427 to 612; sequence GLRDATSTKY…ICHTIVFTEE (186 aa). The segment at 598 to 678 is ion transport-like; that stretch reads YFFFRICHTI…DFFSHAWNIF (81 aa). Residues 613 to 633 traverse the membrane as a helical segment; sequence FEHVGYLVILMNIFPFIISWI. Residues 634 to 637 are Extracellular-facing; that stretch reads SQLN. The chain crosses the membrane as a helical span at residues 638–664; that stretch reads VIYHSELKHTNYCFLTLYILEALLKIA. At 665–671 the chain is on the cytoplasmic side; the sequence is AMRKDFF. A helical transmembrane segment spans residues 672–696; that stretch reads SHAWNIFELAITLIGILHVILIEID. Residues 697–704 are Extracellular-facing; sequence TIKYIFNE. Residues 705–731 traverse the membrane as a helical segment; that stretch reads TEVIVFIKVVQFFRILRIFKLIAPKLL. Topologically, residues 732 to 1177 are cytoplasmic; the sequence is QIIDKRMSHQ…RINLRKVRKE (446 aa).

This sequence belongs to the monovalent cation:proton antiporter 1 (CPA1) transporter (TC 2.A.36) family. Interacts with soluble adenylyl cyclase (sAC). Sperm.

It is found in the cell projection. The protein localises to the cilium. It localises to the flagellum membrane. Functionally, sperm-specific solute carrier involved in intracellular pH regulation of spermatozoa. Required for sperm motility and fertility. Involved in sperm cell hyperactivation, a step needed for sperm motility which is essential late in the preparation of sperm for fertilization. Required for the expression and bicarbonate regulation of the soluble adenylyl cyclase (sAC). This is Solute carrier family 9 member C1 (SLC9C1) from Homo sapiens (Human).